A 369-amino-acid polypeptide reads, in one-letter code: DNA replication and repair protein RecF (369 aa).

Residue 30–37 coordinates ATP; the sequence is GENAQGKT.

This sequence belongs to the RecF family.

The protein localises to the cytoplasm. Functionally, the RecF protein is involved in DNA metabolism; it is required for DNA replication and normal SOS inducibility. RecF binds preferentially to single-stranded, linear DNA. It also seems to bind ATP. The chain is DNA replication and repair protein RecF from Oceanobacillus iheyensis (strain DSM 14371 / CIP 107618 / JCM 11309 / KCTC 3954 / HTE831).